We begin with the raw amino-acid sequence, 320 residues long: Ribosomal RNA large subunit methyltransferase F (320 aa).

Positions methionine 1–asparagine 20 are disordered.

It belongs to the methyltransferase superfamily. METTL16/RlmF family.

It is found in the cytoplasm. It carries out the reaction adenosine(1618) in 23S rRNA + S-adenosyl-L-methionine = N(6)-methyladenosine(1618) in 23S rRNA + S-adenosyl-L-homocysteine + H(+). Specifically methylates the adenine in position 1618 of 23S rRNA. The protein is Ribosomal RNA large subunit methyltransferase F of Saccharophagus degradans (strain 2-40 / ATCC 43961 / DSM 17024).